Reading from the N-terminus, the 250-residue chain is 1-acyl-sn-glycerol-3-phosphate acyltransferase (250 aa).

The HXXXXD motif signature appears at 88 to 93 (HIAAMD).

Belongs to the 1-acyl-sn-glycerol-3-phosphate acyltransferase family.

The catalysed reaction is a 1-acyl-sn-glycero-3-phosphate + an acyl-CoA = a 1,2-diacyl-sn-glycero-3-phosphate + CoA. Its pathway is phospholipid metabolism; CDP-diacylglycerol biosynthesis; CDP-diacylglycerol from sn-glycerol 3-phosphate: step 2/3. Its function is as follows. Converts lysophosphatidic acid (LPA) into phosphatidic acid by incorporating acyl moiety at the 2 position. This Borreliella burgdorferi (strain ATCC 35210 / DSM 4680 / CIP 102532 / B31) (Borrelia burgdorferi) protein is 1-acyl-sn-glycerol-3-phosphate acyltransferase (plsC).